A 668-amino-acid polypeptide reads, in one-letter code: Trehalase (668 aa).

The tract at residues 1–23 (MVLQQTEPTDGADRKASDGPLTV) is disordered.

It belongs to the glycosyl hydrolase 15 family. As to quaternary structure, homomultimer of 20 or more subunits. Mg(2+) serves as cofactor. The cofactor is phosphate.

The catalysed reaction is alpha,alpha-trehalose + H2O = alpha-D-glucose + beta-D-glucose. Its pathway is glycan degradation; trehalose degradation; D-glucose from alpha,alpha-trehalose: step 1/1. Its activity is regulated as follows. Inhibited by pyrophosphate and polyphosphates. Also competitively inhibited by validoxylamine and castanospermine, but not by trehazolin. Functionally, catalyzes the hydrolysis of alpha,alpha-trehalose into two molecules of D-glucose. Does not hydrolyze maltose, isomaltose, sucrose, cellobiose, p-nitrophenyl-alpha-D-glucopyranoside, and methyl-alpha-D-glucopyranoside. Is also inactive on alpha,beta-trehalose, beta,beta-trehalose, alpha,alpha-trehalose-6,6'-dibehenate, trehalulose, nigerose, and trehalose dimycolate. The chain is Trehalase from Mycolicibacterium smegmatis (strain ATCC 700084 / mc(2)155) (Mycobacterium smegmatis).